We begin with the raw amino-acid sequence, 82 residues long: LVMAGVESGRDGHIARNNNCVYVCFIEYTYIGTSRINCNDLCTKNGAKSGYCHQFSEYGNSCWCIDLPDNVPIKVPGDCHLQ.

The signal sequence occupies residues 1–8 (LVMAGVES). The LCN-type CS-alpha/beta domain occupies 10–80 (RDGHIARNNN…VPIKVPGDCH (71 aa)). 4 cysteine pairs are disulfide-bonded: Cys-20–Cys-79, Cys-24–Cys-52, Cys-38–Cys-62, and Cys-42–Cys-64.

In terms of tissue distribution, expressed by the venom gland.

The protein resides in the secreted. In terms of biological role, alpha toxins bind voltage-independently at site-3 of sodium channels (Nav) and inhibit the inactivation of the activated channels, thereby blocking neuronal transmission. The sequence is that of Sodium channel neurotoxin MeuNaTxalpha-3 from Mesobuthus eupeus (Lesser Asian scorpion).